Here is a 182-residue protein sequence, read N- to C-terminus: Ribosome-recycling factor (182 aa).

It belongs to the RRF family.

It localises to the cytoplasm. In terms of biological role, responsible for the release of ribosomes from messenger RNA at the termination of protein biosynthesis. May increase the efficiency of translation by recycling ribosomes from one round of translation to another. The sequence is that of Ribosome-recycling factor from Prochlorococcus marinus (strain MIT 9515).